An 81-amino-acid chain; its full sequence is Three-finger toxin MALT0057C (81 aa).

The first 21 residues, 1–21 (MKTLLLTLVVVTIVCLDFGHT), serve as a signal peptide directing secretion. Cystine bridges form between C24–C43, C38–C60, C62–C73, and C74–C79.

This sequence belongs to the three-finger toxin family. Short-chain subfamily. Type I alpha-neurotoxin sub-subfamily. In terms of tissue distribution, expressed by the venom gland.

It localises to the secreted. Functionally, binds to muscle nicotinic acetylcholine receptor (nAChR) and inhibit acetylcholine from binding to the receptor, thereby impairing neuromuscular transmission. This is Three-finger toxin MALT0057C from Micrurus altirostris (Uruguayan coral snake).